The sequence spans 92 residues: MTKSELIERIVTQQGQLSAKDVELAIKTMLEQMSQALATGDRIEIRGFGSFSLHYRAPRVGRNPKTGQTVRLDGKFVPHFKPGKELRDRVNE.

This sequence belongs to the bacterial histone-like protein family. In terms of assembly, heterodimer of an alpha and a beta chain.

Its function is as follows. This protein is one of the two subunits of integration host factor, a specific DNA-binding protein that functions in genetic recombination as well as in transcriptional and translational control. This is Integration host factor subunit beta from Azotobacter vinelandii (strain DJ / ATCC BAA-1303).